The sequence spans 184 residues: CDP-archaeol synthase (184 aa).

5 consecutive transmembrane segments (helical) span residues 4 to 24 (IIMV…NPGA), 54 to 74 (FIGG…IIYI), 86 to 106 (IISA…GDIT), 122 to 142 (GSLL…FIFA), and 145 to 165 (FFLE…LTPP).

The protein belongs to the CDP-archaeol synthase family. The cofactor is Mg(2+).

It localises to the cell membrane. The enzyme catalyses 2,3-bis-O-(geranylgeranyl)-sn-glycerol 1-phosphate + CTP + H(+) = CDP-2,3-bis-O-(geranylgeranyl)-sn-glycerol + diphosphate. It participates in membrane lipid metabolism; glycerophospholipid metabolism. Functionally, catalyzes the formation of CDP-2,3-bis-(O-geranylgeranyl)-sn-glycerol (CDP-archaeol) from 2,3-bis-(O-geranylgeranyl)-sn-glycerol 1-phosphate (DGGGP) and CTP. This reaction is the third ether-bond-formation step in the biosynthesis of archaeal membrane lipids. The chain is CDP-archaeol synthase from Picrophilus torridus (strain ATCC 700027 / DSM 9790 / JCM 10055 / NBRC 100828 / KAW 2/3).